Here is a 512-residue protein sequence, read N- to C-terminus: Apolipoprotein N-acyltransferase (512 aa).

6 consecutive transmembrane segments (helical) span residues 5-25 (LDKYWQHPALYWPLLILFAAA), 56-76 (FAVSSAYLFGLTAYTTQFYWI), 92-112 (VPLTFLLPAYLALYPALCFWL), 118-138 (LPRGIKIGLVLPILWTLTEFA), 168-188 (LGGIHMVTLATAFLGVWLVLA), and 195-215 (SGKRLLPIILIAALLAAGYTA). A CN hydrolase domain is found at 233 to 477 (LQGNIDQTLK…ETVLEGHIKG (245 aa)). Catalysis depends on E271, which acts as the Proton acceptor. Residue K337 is part of the active site. The active-site Nucleophile is C389. The helical transmembrane segment at 487-507 (TGSSWWLMGILALAALILFIF) threads the bilayer.

It belongs to the CN hydrolase family. Apolipoprotein N-acyltransferase subfamily.

It localises to the cell inner membrane. The catalysed reaction is N-terminal S-1,2-diacyl-sn-glyceryl-L-cysteinyl-[lipoprotein] + a glycerophospholipid = N-acyl-S-1,2-diacyl-sn-glyceryl-L-cysteinyl-[lipoprotein] + a 2-acyl-sn-glycero-3-phospholipid + H(+). It participates in protein modification; lipoprotein biosynthesis (N-acyl transfer). Its function is as follows. Catalyzes the phospholipid dependent N-acylation of the N-terminal cysteine of apolipoprotein, the last step in lipoprotein maturation. This chain is Apolipoprotein N-acyltransferase, found in Neisseria meningitidis serogroup B (strain ATCC BAA-335 / MC58).